A 141-amino-acid chain; its full sequence is Large ribosomal subunit protein uL11 (141 aa).

It belongs to the universal ribosomal protein uL11 family. In terms of assembly, part of the ribosomal stalk of the 50S ribosomal subunit. Interacts with L10 and the large rRNA to form the base of the stalk. L10 forms an elongated spine to which L12 dimers bind in a sequential fashion forming a multimeric L10(L12)X complex. One or more lysine residues are methylated.

Functionally, forms part of the ribosomal stalk which helps the ribosome interact with GTP-bound translation factors. In Chlamydia muridarum (strain MoPn / Nigg), this protein is Large ribosomal subunit protein uL11.